Reading from the N-terminus, the 158-residue chain is 6,7-dimethyl-8-ribityllumazine synthase (158 aa).

5-amino-6-(D-ribitylamino)uracil is bound by residues Phe22, 57 to 59 (AYE), and 84 to 86 (TVI). 89-90 (GT) contacts (2S)-2-hydroxy-3-oxobutyl phosphate. The active-site Proton donor is the His92. Phe117 contributes to the 5-amino-6-(D-ribitylamino)uracil binding site. Arg131 provides a ligand contact to (2S)-2-hydroxy-3-oxobutyl phosphate.

It belongs to the DMRL synthase family. Forms an icosahedral capsid composed of 60 subunits, arranged as a dodecamer of pentamers.

It carries out the reaction (2S)-2-hydroxy-3-oxobutyl phosphate + 5-amino-6-(D-ribitylamino)uracil = 6,7-dimethyl-8-(1-D-ribityl)lumazine + phosphate + 2 H2O + H(+). The protein operates within cofactor biosynthesis; riboflavin biosynthesis; riboflavin from 2-hydroxy-3-oxobutyl phosphate and 5-amino-6-(D-ribitylamino)uracil: step 1/2. In terms of biological role, catalyzes the formation of 6,7-dimethyl-8-ribityllumazine by condensation of 5-amino-6-(D-ribitylamino)uracil with 3,4-dihydroxy-2-butanone 4-phosphate. This is the penultimate step in the biosynthesis of riboflavin. This is 6,7-dimethyl-8-ribityllumazine synthase from Pectobacterium carotovorum subsp. carotovorum (strain PC1).